We begin with the raw amino-acid sequence, 466 residues long: 3-isopropylmalate dehydratase large subunit (466 aa).

[4Fe-4S] cluster-binding residues include Cys347, Cys407, and Cys410.

This sequence belongs to the aconitase/IPM isomerase family. LeuC type 1 subfamily. Heterodimer of LeuC and LeuD. Requires [4Fe-4S] cluster as cofactor.

The enzyme catalyses (2R,3S)-3-isopropylmalate = (2S)-2-isopropylmalate. Its pathway is amino-acid biosynthesis; L-leucine biosynthesis; L-leucine from 3-methyl-2-oxobutanoate: step 2/4. Its function is as follows. Catalyzes the isomerization between 2-isopropylmalate and 3-isopropylmalate, via the formation of 2-isopropylmaleate. The sequence is that of 3-isopropylmalate dehydratase large subunit from Klebsiella pneumoniae (strain 342).